A 152-amino-acid polypeptide reads, in one-letter code: Transcriptional regulator MraZ (152 aa).

SpoVT-AbrB domains lie at alanine 5–glutamate 52 and alanine 81–alanine 124.

It belongs to the MraZ family. Forms oligomers.

It is found in the cytoplasm. The protein localises to the nucleoid. The protein is Transcriptional regulator MraZ of Shewanella frigidimarina (strain NCIMB 400).